The following is a 257-amino-acid chain: 3-methyl-2-oxobutanoate hydroxymethyltransferase (257 aa).

The Mg(2+) site is built by D42 and D86. Residues 42-43, D86, and K116 contribute to the 3-methyl-2-oxobutanoate site; that span reads DS. Residue E118 coordinates Mg(2+). The active-site Proton acceptor is E185.

The protein belongs to the PanB family. In terms of assembly, homodecamer; pentamer of dimers. It depends on Mg(2+) as a cofactor.

It localises to the cytoplasm. It catalyses the reaction 3-methyl-2-oxobutanoate + (6R)-5,10-methylene-5,6,7,8-tetrahydrofolate + H2O = 2-dehydropantoate + (6S)-5,6,7,8-tetrahydrofolate. It functions in the pathway cofactor biosynthesis; (R)-pantothenate biosynthesis; (R)-pantoate from 3-methyl-2-oxobutanoate: step 1/2. Its function is as follows. Catalyzes the reversible reaction in which hydroxymethyl group from 5,10-methylenetetrahydrofolate is transferred onto alpha-ketoisovalerate to form ketopantoate. The protein is 3-methyl-2-oxobutanoate hydroxymethyltransferase of Prochlorococcus marinus subsp. pastoris (strain CCMP1986 / NIES-2087 / MED4).